A 225-amino-acid polypeptide reads, in one-letter code: Heptaprenylglyceryl phosphate synthase (225 aa).

Position 6 (Lys6) interacts with sn-glycerol 1-phosphate. 2 residues coordinate Mg(2+): Asp8 and Thr34. Sn-glycerol 1-phosphate-binding positions include 153 to 158 (YIEYSG), Gly183, and 203 to 204 (GN).

This sequence belongs to the GGGP/HepGP synthase family. Group I subfamily. In terms of assembly, homodimer. Mg(2+) serves as cofactor.

The enzyme catalyses sn-glycerol 1-phosphate + all-trans-heptaprenyl diphosphate = 3-heptaprenyl-sn-glycero-1-phosphate + diphosphate. The protein operates within membrane lipid metabolism; glycerophospholipid metabolism. Prenyltransferase that catalyzes in vivo the transfer of the heptaprenyl moiety of heptaprenyl pyrophosphate (HepPP; 35 carbon atoms) to the C3 hydroxyl of sn-glycerol-1-phosphate (G1P), producing heptaprenylglyceryl phosphate (HepGP). This reaction is an ether-bond-formation step in the biosynthesis of archaea-type G1P-based membrane lipids found in Bacillales. This chain is Heptaprenylglyceryl phosphate synthase, found in Listeria welshimeri serovar 6b (strain ATCC 35897 / DSM 20650 / CCUG 15529 / CIP 8149 / NCTC 11857 / SLCC 5334 / V8).